We begin with the raw amino-acid sequence, 264 residues long: 3'-5' ssDNA/RNA exonuclease TatD (264 aa).

A divalent metal cation is bound by residues glutamate 92, histidine 128, and histidine 153.

This sequence belongs to the metallo-dependent hydrolases superfamily. TatD-type hydrolase family. TatD subfamily. In terms of assembly, monomer. The cofactor is Mg(2+).

Its subcellular location is the cytoplasm. Its function is as follows. 3'-5' exonuclease that prefers single-stranded DNA and RNA. May play a role in the H(2)O(2)-induced DNA damage repair. This Dickeya dadantii (strain 3937) (Erwinia chrysanthemi (strain 3937)) protein is 3'-5' ssDNA/RNA exonuclease TatD.